A 412-amino-acid polypeptide reads, in one-letter code: ATP phosphoribosyltransferase regulatory subunit (412 aa).

It belongs to the class-II aminoacyl-tRNA synthetase family. HisZ subfamily. As to quaternary structure, heteromultimer composed of HisG and HisZ subunits.

The protein localises to the cytoplasm. The protein operates within amino-acid biosynthesis; L-histidine biosynthesis; L-histidine from 5-phospho-alpha-D-ribose 1-diphosphate: step 1/9. Its function is as follows. Required for the first step of histidine biosynthesis. May allow the feedback regulation of ATP phosphoribosyltransferase activity by histidine. This is ATP phosphoribosyltransferase regulatory subunit from Dehalococcoides mccartyi (strain ATCC BAA-2266 / KCTC 15142 / 195) (Dehalococcoides ethenogenes (strain 195)).